Consider the following 166-residue polypeptide: UPF0251 protein UNCMA_27150 (166 aa).

The protein belongs to the UPF0251 family.

The sequence is that of UPF0251 protein UNCMA_27150 from Methanocella arvoryzae (strain DSM 22066 / NBRC 105507 / MRE50).